Here is a 384-residue protein sequence, read N- to C-terminus: Cytochrome b (384 aa).

A run of 4 helical transmembrane segments spans residues 32–52, 76–98, 113–133, and 179–199; these read LGSLLGLCLVIQITTGIFLAM, WLIRYMHTNGASFFFICMYIHIG, VWTVGVIIFILTMAAAFLGYC, and FFTFHYLVPFIIAAMVIMHLM. 2 residues coordinate heme b: histidine 82 and histidine 96. The heme b site is built by histidine 183 and histidine 197. Histidine 202 serves as a coordination point for a ubiquinone. 4 consecutive transmembrane segments (helical) span residues 225-245, 289-309, 321-341, and 348-368; these read FIFKDLVTVFVFMIFFSLFVF, LGGVITMFGTILVLLMLPITD, LSKFFFFLFITNFILLGKLGE, and FILMGQICTFIYFAYFLILVP.

This sequence belongs to the cytochrome b family. Fungal cytochrome b-c1 complex contains 10 subunits; 3 respiratory subunits, 2 core proteins and 5 low-molecular weight proteins. Cytochrome b-c1 complex is a homodimer. Heme b serves as cofactor.

It is found in the mitochondrion inner membrane. In terms of biological role, component of the ubiquinol-cytochrome c reductase complex (complex III or cytochrome b-c1 complex) that is part of the mitochondrial respiratory chain. The b-c1 complex mediates electron transfer from ubiquinol to cytochrome c. Contributes to the generation of a proton gradient across the mitochondrial membrane that is then used for ATP synthesis. The protein is Cytochrome b (COB) of Eremothecium gossypii (strain ATCC 10895 / CBS 109.51 / FGSC 9923 / NRRL Y-1056) (Yeast).